Here is a 546-residue protein sequence, read N- to C-terminus: Cytokine-like nuclear factor N-PAC (546 aa).

The PWWP domain maps to 8–66; sequence LGDLVWGKLGRYPPWPGKIVNPPKDLKKPRGKKCFFVKFFGTEDHAWIKVEQLKPYHAH. Basic and acidic residues-rich tracts occupy residues 91–145 and 161–181; these read RRAK…EGKK and RAQEQSPRKRGRPPKDEKDLT. Positions 91 to 187 are disordered; that stretch reads RRAKGKDQTS…KDLTIPESST (97 aa). At Ser-130 the chain carries Phosphoserine. Residue Lys-135 forms a Glycyl lysine isopeptide (Lys-Gly) (interchain with G-Cter in SUMO2) linkage. Ser-166 carries the post-translational modification Phosphoserine. The segment at residues 167 to 179 is a DNA-binding region (a.T hook); it reads PRKRGRPPKDEKD. Residues Lys-175, Lys-178, Lys-200, and Lys-210 each participate in a glycyl lysine isopeptide (Lys-Gly) (interchain with G-Cter in SUMO2) cross-link. Positions 213–216 are interaction with histone H3; it reads DPHF. The tract at residues 215 to 224 is interaction with KDM1B; sequence HFHHFLLSQT. Residues Lys-226, Lys-236, Lys-239, and Lys-268 each participate in a glycyl lysine isopeptide (Lys-Gly) (interchain with G-Cter in SUMO2) cross-link. Residues 260 to 546 form a dehydrogenase domain region; it reads GSITPTDKKI…MSAVYRAYIH (287 aa). 270-284 serves as a coordination point for NAD(+); that stretch reads GFLGLGLMGSGIVSN. Residue Lys-301 forms a Glycyl lysine isopeptide (Lys-Gly) (interchain with G-Cter in SUMO2) linkage. NAD(+)-binding residues include Thr-355 and Lys-498. The residue at position 533 (Ser-533) is a Phosphoserine.

It belongs to the HIBADH-related family. NP60 subfamily. As to quaternary structure, homotetramere. Interacts with MAPK14. Interacts with KDM1B at nucleosomes; this interaction stimulates H3K4me1 and H3K4me2 demethylation. Binds to mononucleosomes. Interacts with GATA4; the interaction is required for a synergistic activation of GATA4 target genes transcription.

It localises to the nucleus. The protein resides in the chromosome. Functionally, cytokine-like nuclear factor with chromatin gene reader activity involved in chromatin modification and regulation of gene expression. Acts as a nucleosome-destabilizing factor that is recruited to genes during transcriptional activation. Recognizes and binds histone H3 without a preference for specific epigenetic markers and also binds DNA. Interacts with KDM1B and promotes its histone demethylase activity by facilitating the capture of H3 tails, they form a multifunctional enzyme complex that modifies transcribed chromatin and facilitates Pol II transcription through nucleosomes. Stimulates the acetylation of 'Lys-56' of nucleosomal histone H3 (H3K56ac) by EP300. With GATA4, co-binds a defined set of heart development genes and coregulates their expression during cardiomyocyte differentiation. Regulates p38 MAP kinase activity by mediating stress activation of MAPK14/p38alpha and specifically regulating MAPK14 signaling. Indirectly promotes phosphorylation of MAPK14 and activation of ATF2. The phosphorylation of MAPK14 requires upstream activity of MAP2K4 and MAP2K6. The chain is Cytokine-like nuclear factor N-PAC from Mus musculus (Mouse).